The following is a 402-amino-acid chain: Deoxyguanosinetriphosphate triphosphohydrolase-like protein (402 aa).

A disordered region spans residues 20-39; it reads PAFSRGRLVPEPESPTRTPF. The HD domain occupies 73–217; it reads RLTHTIEVAQ…AAIADDIAYN (145 aa).

This sequence belongs to the dGTPase family. Type 2 subfamily.

The protein is Deoxyguanosinetriphosphate triphosphohydrolase-like protein of Brucella canis (strain ATCC 23365 / NCTC 10854 / RM-666).